Here is a 311-residue protein sequence, read N- to C-terminus: Forkhead box protein I2 (311 aa).

The segment at residues 99 to 193 (RPPYSYSALI…DNGNFRRKRR (95 aa)) is a DNA-binding region (fork-head). 2 disordered regions span residues 188 to 237 (FRRK…TTTC) and 263 to 294 (FSLR…QTGA). A compositionally biased stretch (low complexity) spans 219–231 (STPQDPQTSPSPS).

It is found in the nucleus. Functionally, possible transcriptional activator. In Mus musculus (Mouse), this protein is Forkhead box protein I2.